Here is a 217-residue protein sequence, read N- to C-terminus: Tegument protein BKRF4 (217 aa).

A disordered region spans residues 1-217 (MAMFLKSRGV…GNNNYNWPWL (217 aa)). The segment covering 32 to 42 (YTLGSQASQSI) has biased composition (polar residues). Residues 43–79 (QEEDVSDTDESDYSDEDEEIDLEEEYPSDEDPSEGSD) are compositionally biased toward acidic residues. Residues 63–64 (DL) form an interaction with host histones H3/H4 region. Residues 81 to 84 (DPSW) form an interaction with host H2A/H2B region. Over residues 89 to 102 (SDESDYSESDEDEA) the composition is skewed to acidic residues. Residues 106 to 132 (SQASRSSRVSPSTQQSSGLTPTPSFSR) are compositionally biased toward low complexity. Over residues 136–145 (RAPPRPPAPA) the composition is skewed to pro residues. A compositionally biased stretch (polar residues) spans 208 to 217 (GNNNYNWPWL).

This sequence belongs to the lymphocryptovirus BKRF4 family. As to quaternary structure, forms a complex with the host H3/H4 dimer and histone chaperone ASF1. Also forms a complex with host H2A/H2B dimer. Interacts (via C-terminus) with BGLF2; this interaction is important for infectious virion production.

Its subcellular location is the virion tegument. The protein resides in the host nucleus. The protein localises to the host cytoplasm. It localises to the host perinuclear region. In terms of biological role, histone-binding protein that binds to histones H2A/H2B, H3/H4 and cellular chromatin to overcome the host DNA damage response triggered by the viral genome ends. Interferes with histone ubiquitination and recruitment of repair proteins. The chain is Tegument protein BKRF4 from Epstein-Barr virus (strain GD1) (HHV-4).